We begin with the raw amino-acid sequence, 105 residues long: Large ribosomal subunit protein uL24 (105 aa).

It belongs to the universal ribosomal protein uL24 family. In terms of assembly, part of the 50S ribosomal subunit.

One of two assembly initiator proteins, it binds directly to the 5'-end of the 23S rRNA, where it nucleates assembly of the 50S subunit. Functionally, one of the proteins that surrounds the polypeptide exit tunnel on the outside of the subunit. In Anaplasma marginale (strain St. Maries), this protein is Large ribosomal subunit protein uL24.